The chain runs to 399 residues: GDP-D-glucose phosphorylase 1 (399 aa).

The Tele-GMP-histidine intermediate role is filled by H237.

Belongs to the GDPGP1 family.

It is found in the cytoplasm. It carries out the reaction GDP-alpha-D-glucose + phosphate = alpha-D-glucose 1-phosphate + GDP + H(+). Functionally, specific and highly efficient GDP-D-glucose phosphorylase regulating the levels of GDP-D-glucose in cells. The sequence is that of GDP-D-glucose phosphorylase 1 (gdpgp1) from Xenopus laevis (African clawed frog).